The chain runs to 429 residues: Enolase (429 aa).

Q162 contributes to the (2R)-2-phosphoglycerate binding site. Catalysis depends on E204, which acts as the Proton donor. Mg(2+)-binding residues include D241, E283, and D310. K335, R364, S365, and K386 together coordinate (2R)-2-phosphoglycerate. The active-site Proton acceptor is K335.

It belongs to the enolase family. Mg(2+) serves as cofactor.

It is found in the cytoplasm. The protein localises to the secreted. The protein resides in the cell surface. The enzyme catalyses (2R)-2-phosphoglycerate = phosphoenolpyruvate + H2O. Its pathway is carbohydrate degradation; glycolysis; pyruvate from D-glyceraldehyde 3-phosphate: step 4/5. Functionally, catalyzes the reversible conversion of 2-phosphoglycerate (2-PG) into phosphoenolpyruvate (PEP). It is essential for the degradation of carbohydrates via glycolysis. In Mycobacterium bovis (strain BCG / Pasteur 1173P2), this protein is Enolase.